The following is a 541-amino-acid chain: Membrane protein insertase YidC (541 aa).

Helical transmembrane passes span 7-27, 345-365, 415-435, 453-473, and 492-512; these read LLFM…QVDY, LVQN…AILY, LGGC…YWTF, LSAQ…MFLL, and FMPL…VLYW.

It belongs to the OXA1/ALB3/YidC family. Type 1 subfamily. Interacts with the Sec translocase complex via SecD. Specifically interacts with transmembrane segments of nascent integral membrane proteins during membrane integration.

The protein localises to the cell inner membrane. Required for the insertion and/or proper folding and/or complex formation of integral membrane proteins into the membrane. Involved in integration of membrane proteins that insert both dependently and independently of the Sec translocase complex, as well as at least some lipoproteins. Aids folding of multispanning membrane proteins. The chain is Membrane protein insertase YidC from Histophilus somni (strain 129Pt) (Haemophilus somnus).